The sequence spans 464 residues: ESX-1 secretion system protein EccE1 (464 aa).

Helical transmembrane passes span 11–31 and 34–54; these read FTTG…AICM and DLLW…VLTI.

It belongs to the EccE family. As to quaternary structure, part of the ESX-1 / type VII secretion system (T7SS), which is composed of cytosolic and membrane components. The ESX-1 membrane complex is composed of EccB1, EccCa1, EccCb1, EccD1 and EccE1.

Its subcellular location is the cell inner membrane. Its function is as follows. Part of the ESX-1 / type VII specialized secretion system (T7SS), which exports several proteins including EsxA and EsxB. Plays a role in DNA conjugation, in at least a donor strain. The chain is ESX-1 secretion system protein EccE1 from Mycolicibacterium smegmatis (strain ATCC 700084 / mc(2)155) (Mycobacterium smegmatis).